Consider the following 99-residue polypeptide: Malonate decarboxylase acyl carrier protein (99 aa).

Residue serine 25 is modified to O-(phosphoribosyl dephospho-coenzyme A)serine.

This sequence belongs to the MdcC family. Post-translationally, covalently binds the prosthetic group of malonate decarboxylase.

It localises to the cytoplasm. Functionally, subunit of malonate decarboxylase, it is an acyl carrier protein to which acetyl and malonyl thioester residues are bound via a 2'-(5''-phosphoribosyl)-3'-dephospho-CoA prosthetic group and turn over during the catalytic mechanism. The protein is Malonate decarboxylase acyl carrier protein of Pseudomonas putida (strain GB-1).